Consider the following 202-residue polypeptide: Recombination protein RecR (202 aa).

The C4-type zinc-finger motif lies at Cys-61 to Cys-76. One can recognise a Toprim domain in the interval Ser-84–Pro-179.

Belongs to the RecR family.

Its function is as follows. May play a role in DNA repair. It seems to be involved in an RecBC-independent recombinational process of DNA repair. It may act with RecF and RecO. The polypeptide is Recombination protein RecR (Bordetella petrii (strain ATCC BAA-461 / DSM 12804 / CCUG 43448)).